A 108-amino-acid polypeptide reads, in one-letter code: Nucleoid-associated protein Avin_19840 (108 aa).

Belongs to the YbaB/EbfC family. As to quaternary structure, homodimer.

It localises to the cytoplasm. It is found in the nucleoid. Binds to DNA and alters its conformation. May be involved in regulation of gene expression, nucleoid organization and DNA protection. The polypeptide is Nucleoid-associated protein Avin_19840 (Azotobacter vinelandii (strain DJ / ATCC BAA-1303)).